The following is a 52-amino-acid chain: Conotoxin Cal9.2c (52 aa).

A propeptide spanning residues 1 to 6 (KKGVTL) is cleaved from the precursor. Disulfide bonds link Cys-14-Cys-31, Cys-19-Cys-41, and Cys-21-Cys-46.

In terms of tissue distribution, expressed by the venom duct.

Its subcellular location is the secreted. In terms of biological role, probable neurotoxin with unknown target. Possibly targets ion channels. In Californiconus californicus (California cone), this protein is Conotoxin Cal9.2c.